The sequence spans 206 residues: uncharacterized protein (206 aa).

2 disordered regions span residues 38–88 and 160–206; these read RLQQ…NKNA and HQNT…SVQE. Residues 40–73 show a composition bias toward low complexity; it reads QQQQQQQQQQQQNRTASSLQQPQQQQPISPPLFL. Phosphoserine is present on S68. The span at 78–88 shows a compositional bias: polar residues; that stretch reads TSENSNLNKNA. Residues 165–186 show a composition bias toward low complexity; it reads SSSNPGSMSSSPPNSASSIFNS. A compositionally biased stretch (polar residues) spans 192–206; sequence PYTSQSFNPLESVQE.

It is found in the cytoplasm. This is an uncharacterized protein from Saccharomyces cerevisiae (strain ATCC 204508 / S288c) (Baker's yeast).